Consider the following 338-residue polypeptide: Large ribosomal subunit protein uL3 (338 aa).

4 disordered regions span residues 1–44, 151–170, 206–259, and 312–338; these read MPQP…GFAG, AVPS…VGGG, VTKG…GQTG, and FRPA…SNQG. Residues 22-31 are compositionally biased toward polar residues; the sequence is SETPRFNSWP. Basic residues predominate over residues 220–237; sequence GVQKRKGKHARQGWRRRI. Positions 247–259 are enriched in polar residues; it reads RVRSTVPQQGQTG.

It belongs to the universal ribosomal protein uL3 family. In terms of assembly, part of the 50S ribosomal subunit. Forms a cluster with proteins L14 and L24e. Interacts weakly with protein L13.

Functionally, one of the primary rRNA binding proteins, it binds directly near the 3'-end of the 23S rRNA, where it nucleates assembly of the 50S subunit. The protein is Large ribosomal subunit protein uL3 (rpl3) of Haloarcula marismortui (strain ATCC 43049 / DSM 3752 / JCM 8966 / VKM B-1809) (Halobacterium marismortui).